We begin with the raw amino-acid sequence, 813 residues long: Sorting nexin-29 (813 aa).

In terms of domain architecture, RUN spans Ser-36–Lys-180. Ser-268, Ser-291, Ser-292, Ser-330, and Ser-344 each carry phosphoserine. The interval Phe-269–Ser-299 is disordered. The segment covering Asp-346 to Val-357 has biased composition (acidic residues). Residues Asp-346 to Glu-378 form a disordered region. Ser-445 and Ser-450 each carry phosphoserine. Positions Thr-466–Val-545 form a coiled coil. Ser-639 is modified (phosphoserine). Thr-641 bears the Phosphothreonine mark. Phosphoserine occurs at positions 642 and 646. Positions Ala-656–Gly-779 constitute a PX domain. The interval Pro-778–Leu-813 is disordered.

Belongs to the sorting nexin family.

The polypeptide is Sorting nexin-29 (SNX29) (Homo sapiens (Human)).